Reading from the N-terminus, the 65-residue chain is MVSDAEIKRINELVKKSREEGLTEEEKLEQKALRQKYIDAVKLSLRANLDSIRYVEDLEENKPKQ.

The protein belongs to the UPF0291 family.

The protein localises to the cytoplasm. The sequence is that of UPF0291 protein BBR47_33060 from Brevibacillus brevis (strain 47 / JCM 6285 / NBRC 100599).